The primary structure comprises 153 residues: Superoxide dismutase [Cu-Zn] (153 aa).

Residues His45 and His47 each coordinate Cu cation. A Phosphothreonine modification is found at Thr53. Cysteines 56 and 145 form a disulfide. Phosphoserine is present on Ser59. His62 is a binding site for Cu cation. His62, His70, His79, and Asp82 together coordinate Zn(2+). Residue His119 coordinates Cu cation.

This sequence belongs to the Cu-Zn superoxide dismutase family. In terms of assembly, homodimer. Cu cation serves as cofactor. Zn(2+) is required as a cofactor.

It is found in the cytoplasm. The enzyme catalyses 2 superoxide + 2 H(+) = H2O2 + O2. Destroys radicals which are normally produced within the cells and which are toxic to biological systems. The polypeptide is Superoxide dismutase [Cu-Zn] (Drosophila melanogaster (Fruit fly)).